The following is a 109-amino-acid chain: uncharacterized protein (109 aa).

This is an uncharacterized protein from Homo sapiens (Human).